The chain runs to 512 residues: 2-isopropylmalate synthase (512 aa).

The Pyruvate carboxyltransferase domain maps to 5-267; the sequence is VVIFDTTLRD…ETSINKSEIY (263 aa). Residues D14, H202, H204, and N238 each coordinate Mn(2+). The tract at residues 391–512 is regulatory domain; that stretch reads SLEYLHITSG…LPKAKTERAV (122 aa).

Belongs to the alpha-IPM synthase/homocitrate synthase family. LeuA type 1 subfamily. Homodimer. It depends on Mn(2+) as a cofactor.

It localises to the cytoplasm. The catalysed reaction is 3-methyl-2-oxobutanoate + acetyl-CoA + H2O = (2S)-2-isopropylmalate + CoA + H(+). Its pathway is amino-acid biosynthesis; L-leucine biosynthesis; L-leucine from 3-methyl-2-oxobutanoate: step 1/4. Functionally, catalyzes the condensation of the acetyl group of acetyl-CoA with 3-methyl-2-oxobutanoate (2-ketoisovalerate) to form 3-carboxy-3-hydroxy-4-methylpentanoate (2-isopropylmalate). The polypeptide is 2-isopropylmalate synthase (Heliobacterium modesticaldum (strain ATCC 51547 / Ice1)).